Reading from the N-terminus, the 34-residue chain is Photosystem I reaction center subunit XII (34 aa).

Residues 5–25 (ISSPEIFIALVVAAHAAILAL) form a helical membrane-spanning segment.

Belongs to the PsaM family.

Its subcellular location is the cellular thylakoid membrane. This is Photosystem I reaction center subunit XII from Synechococcus sp. (strain CC9902).